An 881-amino-acid polypeptide reads, in one-letter code: Sodium/sulfate cotransporter 1 (881 aa).

6 helical membrane passes run 8-28 (GIVAVTFTALAFVVMAADWVG), 31-51 (ITFTVLLAFLTAFDGQIVTVA), 61-81 (GLLTVVFLYWVAEGITQTGGL), 107-127 (MVLSAFLNNTPCVTFMIPILI), 140-160 (LLIPLSYAAVLGGTCTSIGTS), and 186-206 (IFDIAPYGVPYALWGFVFILL). RCK C-terminal domains are found at residues 212 to 296 (LPGN…EYGL), 318 to 402 (VFSA…IKTN), 407 to 492 (LHAV…FPGL), and 498 to 584 (EQVD…DKSF). Transmembrane regions (helical) follow at residues 601 to 621 (MIIGVLLATGMVLTQIIGGLK), 625 to 645 (YIHLWPCAVLTAALMLLTGCM), 658 to 678 (VYLTIAAAFGVSAALEGTGVA), 684 to 704 (AIISIGKGAGGTGAALIAIYI), 775 to 795 (FAIVGAPFQVWLMIVAGFILV), and 803 to 823 (VWIVSWICTAGIVLLPALYFL). Positions 854–881 (SLRRQVSHTRTDDSGSSGSPLPAPKIVA) are disordered.

Belongs to the divalent anion:Na+ symporter (DASS) superfamily. Na+/sulfate symporter (TC 2.A.47.4) family.

It is found in the cell membrane. Na(+)/sulfate cotransporter with a probable high-affinity for sulfate and a proteasome dependent turnover. The chain is Sodium/sulfate cotransporter 1 (SLT1) from Chlamydomonas reinhardtii (Chlamydomonas smithii).